A 288-amino-acid polypeptide reads, in one-letter code: MAVGKEIRSKIKSVQSTQKITRAMQMVATSKMRKTQERMRSARPYAEKIREVMAHVAETNPDFKHPALERRDVVKRVGVILVTTDKGLCGGLNANALRTFYQYAERWAEQGIEVDVCCFGQKGYAALTRLDMKVVSSATQLGDTPQQEKLLGPASHIVRAYLDGEIDELHIVYSKFLNTMKQEPRVEQLLPLKTEELESEFPYSWDYLYEPDVRGVLDVLVRRYLESVVYQAVSENMASEQSARMVAMKAATDNAAQAIERLKLTYNKARQAAITTELSEICAGAAAV.

The protein belongs to the ATPase gamma chain family. In terms of assembly, F-type ATPases have 2 components, CF(1) - the catalytic core - and CF(0) - the membrane proton channel. CF(1) has five subunits: alpha(3), beta(3), gamma(1), delta(1), epsilon(1). CF(0) has three main subunits: a, b and c.

It is found in the cell inner membrane. In terms of biological role, produces ATP from ADP in the presence of a proton gradient across the membrane. The gamma chain is believed to be important in regulating ATPase activity and the flow of protons through the CF(0) complex. The protein is ATP synthase gamma chain of Laribacter hongkongensis (strain HLHK9).